The primary structure comprises 147 residues: Large ribosomal subunit protein uL13 (147 aa).

This sequence belongs to the universal ribosomal protein uL13 family. Part of the 50S ribosomal subunit.

In terms of biological role, this protein is one of the early assembly proteins of the 50S ribosomal subunit, although it is not seen to bind rRNA by itself. It is important during the early stages of 50S assembly. The protein is Large ribosomal subunit protein uL13 of Mycolicibacterium smegmatis (strain ATCC 700084 / mc(2)155) (Mycobacterium smegmatis).